We begin with the raw amino-acid sequence, 589 residues long: METDLNDYTVIKEGEAEILMHKKNQVFFNKAQVNNRDMSIAVLREFLSKRKQEHEAKSSKRTRPASKVIEKDASEASKEETPSENGMNNGDHEVASEDGPSSVSKDPAKTTERFAPREPKPPKVLEALSASGLRALRYAREIEGIGQVVALDNDLASVEACQRNIKFNGSVAISKVESHHTDARVHMLTHPKEFDVVDLDPYGSPSIFLDSAIQSVTDGGLLMCTATDMAVLCGGNGEVCYSKYGSYPLRAKYCHEMALRILLASIESHANRYKRYIVPVLSVQMDFYVRVFVRVYTSASAMKNTPLKLSYVYQCIGCDSFHLQPVGRSLPKNNSVRYLPAIGPVVKQDCNHCGKKYNMGGPIWSAPMHDPEWVTSILNSVKSMKDRYPAYDRISAVLTTVSEELLDVPLFLSLHNLCATLKCISPSAAMFRSAVINANYRISGTHVNPLGMKTDAPMEVIWDIMRCWVKNHPIKAQSPEQPGSVILSKEPSHEVDFSRHIGSLSKAQAKKVARFLPNPEKHWGPKLRAGRQITSKHVSLIGHEAVNGHLSQHHEELKEEDEEAEPEDNVQDKVDPKRQKTATDNITST.

The 457-residue stretch at 9–465 (TVIKEGEAEI…APMEVIWDIM (457 aa)) folds into the Trm1 methyltransferase domain. Arg36 lines the S-adenosyl-L-methionine pocket. The tract at residues 51–122 (KQEHEAKSSK…RFAPREPKPP (72 aa)) is disordered. 2 stretches are compositionally biased toward basic and acidic residues: residues 68–81 (VIEK…KEET) and 106–122 (DPAK…PKPP). Arg134, Asp152, and Val185 together coordinate S-adenosyl-L-methionine. Residues Cys315, Cys318, Cys350, and Cys353 each contribute to the Zn(2+) site. A disordered region spans residues 550–589 (LSQHHEELKEEDEEAEPEDNVQDKVDPKRQKTATDNITST). The segment covering 558 to 569 (KEEDEEAEPEDN) has biased composition (acidic residues).

Belongs to the class I-like SAM-binding methyltransferase superfamily. Trm1 family.

The catalysed reaction is guanosine(26) in tRNA + 2 S-adenosyl-L-methionine = N(2)-dimethylguanosine(26) in tRNA + 2 S-adenosyl-L-homocysteine + 2 H(+). Its function is as follows. Dimethylates a single guanine residue at position 26 of most tRNAs using S-adenosyl-L-methionine as donor of the methyl groups. This is tRNA (guanine(26)-N(2))-dimethyltransferase 2 from Arabidopsis thaliana (Mouse-ear cress).